A 99-amino-acid polypeptide reads, in one-letter code: uncharacterized protein (99 aa).

Positions 1–17 (MMMNAFFPAMALIVLVG) are cleaved as a signal peptide. The N-palmitoyl cysteine moiety is linked to residue cysteine 18. Cysteine 18 is lipidated: S-diacylglycerol cysteine.

The protein resides in the cell membrane. This is an uncharacterized protein from Escherichia coli O6:H1 (strain CFT073 / ATCC 700928 / UPEC).